The chain runs to 164 residues: CB1 cannabinoid receptor-interacting protein 1 (164 aa).

Belongs to the CNRIP family. In terms of assembly, interacts with the cannabinoid receptor CNR1 (via C-terminus). Does not interact with cannabinoid receptor CNR2. As to expression, highly expressed in brain. Also detected in heart, lung, intestine, kidney, testis, spleen, liver and muscle (at protein level).

Functionally, suppresses cannabinoid receptor CNR1-mediated tonic inhibition of voltage-gated calcium channels. The chain is CB1 cannabinoid receptor-interacting protein 1 (Cnrip1) from Mus musculus (Mouse).